The chain runs to 134 residues: Large ribosomal subunit protein eL32 (134 aa).

It belongs to the eukaryotic ribosomal protein eL32 family.

The chain is Large ribosomal subunit protein eL32 (rpl32e) from Picrophilus torridus (strain ATCC 700027 / DSM 9790 / JCM 10055 / NBRC 100828 / KAW 2/3).